We begin with the raw amino-acid sequence, 341 residues long: Anthranilate phosphoribosyltransferase (341 aa).

Residues Gly-80, 83 to 84, Thr-88, 90 to 93, 108 to 116, and Ser-120 contribute to the 5-phospho-alpha-D-ribose 1-diphosphate site; these read GD, NIST, and KHGNRAVSS. Position 80 (Gly-80) interacts with anthranilate. Residue Ser-92 coordinates Mg(2+). Asn-111 lines the anthranilate pocket. Arg-166 serves as a coordination point for anthranilate. Residues Asp-225 and Glu-226 each coordinate Mg(2+).

The protein belongs to the anthranilate phosphoribosyltransferase family. As to quaternary structure, homodimer. Mg(2+) is required as a cofactor.

The catalysed reaction is N-(5-phospho-beta-D-ribosyl)anthranilate + diphosphate = 5-phospho-alpha-D-ribose 1-diphosphate + anthranilate. The protein operates within amino-acid biosynthesis; L-tryptophan biosynthesis; L-tryptophan from chorismate: step 2/5. Its function is as follows. Catalyzes the transfer of the phosphoribosyl group of 5-phosphorylribose-1-pyrophosphate (PRPP) to anthranilate to yield N-(5'-phosphoribosyl)-anthranilate (PRA). This is Anthranilate phosphoribosyltransferase from Priestia megaterium (strain ATCC 12872 / QMB1551) (Bacillus megaterium).